The primary structure comprises 113 residues: Hydrogenase maturation factor HypA (113 aa).

Residue His-2 participates in Ni(2+) binding. Zn(2+) contacts are provided by Cys-73, Cys-76, Cys-89, and Cys-92.

This sequence belongs to the HypA/HybF family.

Its function is as follows. Involved in the maturation of [NiFe] hydrogenases. Required for nickel insertion into the metal center of the hydrogenase. In Cereibacter sphaeroides (strain ATCC 17023 / DSM 158 / JCM 6121 / CCUG 31486 / LMG 2827 / NBRC 12203 / NCIMB 8253 / ATH 2.4.1.) (Rhodobacter sphaeroides), this protein is Hydrogenase maturation factor HypA.